We begin with the raw amino-acid sequence, 124 residues long: Small ribosomal subunit protein uS12 (124 aa).

The disordered stretch occupies residues 1–32; that stretch reads MPTIQQLVRKGREDKVVKTKTPALKGSPQRRG. A 3-methylthioaspartic acid modification is found at Asp89. Residues 105-124 form a disordered region; sequence QGVKNRKQARSRYGAKKEKS. Residues 108–118 are compositionally biased toward basic residues; the sequence is KNRKQARSRYG.

Belongs to the universal ribosomal protein uS12 family. As to quaternary structure, part of the 30S ribosomal subunit. Contacts proteins S8 and S17. May interact with IF1 in the 30S initiation complex.

In terms of biological role, with S4 and S5 plays an important role in translational accuracy. Its function is as follows. Interacts with and stabilizes bases of the 16S rRNA that are involved in tRNA selection in the A site and with the mRNA backbone. Located at the interface of the 30S and 50S subunits, it traverses the body of the 30S subunit contacting proteins on the other side and probably holding the rRNA structure together. The combined cluster of proteins S8, S12 and S17 appears to hold together the shoulder and platform of the 30S subunit. This is Small ribosomal subunit protein uS12 from Kineococcus radiotolerans (strain ATCC BAA-149 / DSM 14245 / SRS30216).